Reading from the N-terminus, the 195-residue chain is Myelin basic protein (195 aa).

Ala2 carries the N-acetylalanine modification. Ser8 and Ser13 each carry phosphoserine. Residue Tyr15 is modified to Phosphotyrosine. Thr18 is subject to Phosphothreonine. The residue at position 20 (Ser20) is a Phosphoserine. Thr21 carries the post-translational modification Phosphothreonine. 2 positions are modified to citrulline: Arg26 and Arg32. The residue at position 36 (Thr36) is a Phosphothreonine. A Phosphoserine modification is found at Ser41. Omega-N-methylarginine occurs at positions 44 and 50. A disordered region spans residues 45–79; the sequence is FFSGDRGAPKRGSGKVPWLKQSRSPLPSHARSRPG. A Phosphoserine modification is found at Ser57. Phosphothreonine is present on Thr92. Tyr94 carries the post-translational modification Phosphotyrosine. Ser101 carries the post-translational modification Phosphoserine. Phosphothreonine is present on residues Thr104, Thr119, and Thr122. The interval 117–139 is disordered; that stretch reads IVTPRTPPPSQGKGRGLSLSRFS. Gln127 is subject to Deamidated glutamine. Arg131 bears the Omega-N-methylarginine; alternate mark. A Symmetric dimethylarginine; alternate modification is found at Arg131. Phosphoserine is present on Ser139. The residue at position 146 (Lys146) is an N6-acetyllysine. Arg154 bears the Citrulline mark. Gln172 bears the Deamidated glutamine mark. Arg184 is subject to Citrulline. Ser186 carries the post-translational modification Phosphoserine. Ser190 is modified (phosphoserine; by UHMK1). Position 195 is a citrulline (Arg195).

Belongs to the myelin basic protein family. In terms of assembly, homodimer. In terms of processing, as in other animals, several charge isomers may be produced as a result of optional post-translational modifications, such as phosphorylation of serine or threonine residues, deamidation of glutamine or asparagine residues, citrullination and methylation of arginine residues. Arg-131 was found to be 44% monomethylated and 11% symmetrically dimethylated. Post-translationally, phosphorylated by TAOK2, VRK2, MAPK11, MAPK12, MAPK14 and MINK1. In terms of processing, proteolytically cleaved in B cell lysosomes by cathepsin CTSG which degrades the major immunogenic MBP epitope and prevents the activation of MBP-specific autoreactive T cells. As to expression, found in both the central and the peripheral nervous system.

It is found in the myelin membrane. Its function is as follows. Is, with PLP, the most abundant protein component of the myelin membrane in the CNS. Has a role in both the formation and stabilization of this compact multilayer arrangement of bilayers. Each splice variant and charge isomer may have a specialized function in the assembly of an optimized, biochemically functional myelin membrane. The polypeptide is Myelin basic protein (Mbp) (Rattus norvegicus (Rat)).